Here is a 297-residue protein sequence, read N- to C-terminus: HTH-type transcriptional regulator ArgP (297 aa).

The HTH lysR-type domain occupies 4-60 (PDYRTLQALDAVIRERGFERAAQKLCITQSAVSQRIKQLENMFGQPLLVRTVPPRPT). Residues 21-40 (FERAAQKLCITQSAVSQRIK) constitute a DNA-binding region (H-T-H motif).

Belongs to the LysR transcriptional regulatory family. Homodimer.

Controls the transcription of genes involved in arginine and lysine metabolism. The chain is HTH-type transcriptional regulator ArgP from Klebsiella pneumoniae subsp. pneumoniae (strain ATCC 700721 / MGH 78578).